A 591-amino-acid chain; its full sequence is L-fucose isomerase (591 aa).

Active-site proton acceptor residues include E337 and D361. Positions 337, 361, and 528 each coordinate Mn(2+).

It belongs to the L-fucose isomerase family. Homohexamer. The cofactor is Mn(2+).

The protein localises to the cytoplasm. The enzyme catalyses L-fucose = L-fuculose. It participates in carbohydrate degradation; L-fucose degradation; L-lactaldehyde and glycerone phosphate from L-fucose: step 1/3. In terms of biological role, converts the aldose L-fucose into the corresponding ketose L-fuculose. The chain is L-fucose isomerase from Citrobacter koseri (strain ATCC BAA-895 / CDC 4225-83 / SGSC4696).